Reading from the N-terminus, the 163-residue chain is Crossover junction endodeoxyribonuclease RuvC (163 aa).

Residues D8, E68, and D140 contribute to the active site. Residues D8, E68, and D140 each coordinate Mg(2+).

It belongs to the RuvC family. Homodimer which binds Holliday junction (HJ) DNA. The HJ becomes 2-fold symmetrical on binding to RuvC with unstacked arms; it has a different conformation from HJ DNA in complex with RuvA. In the full resolvosome a probable DNA-RuvA(4)-RuvB(12)-RuvC(2) complex forms which resolves the HJ. Mg(2+) serves as cofactor.

Its subcellular location is the cytoplasm. The catalysed reaction is Endonucleolytic cleavage at a junction such as a reciprocal single-stranded crossover between two homologous DNA duplexes (Holliday junction).. The RuvA-RuvB-RuvC complex processes Holliday junction (HJ) DNA during genetic recombination and DNA repair. Endonuclease that resolves HJ intermediates. Cleaves cruciform DNA by making single-stranded nicks across the HJ at symmetrical positions within the homologous arms, yielding a 5'-phosphate and a 3'-hydroxyl group; requires a central core of homology in the junction. The consensus cleavage sequence is 5'-(A/T)TT(C/G)-3'. Cleavage occurs on the 3'-side of the TT dinucleotide at the point of strand exchange. HJ branch migration catalyzed by RuvA-RuvB allows RuvC to scan DNA until it finds its consensus sequence, where it cleaves and resolves the cruciform DNA. The sequence is that of Crossover junction endodeoxyribonuclease RuvC from Erythrobacter litoralis (strain HTCC2594).